The following is a 525-amino-acid chain: GMP synthase [glutamine-hydrolyzing] (525 aa).

The Glutamine amidotransferase type-1 domain occupies 8 to 206 (PLLILDFGSQ…VVDICKASTD (199 aa)). Cys-85 serves as the catalytic Nucleophile. Active-site residues include His-180 and Glu-182. Residues 207–400 (WTPEHIIDEA…LGLPHDMVYR (194 aa)) enclose the GMPS ATP-PPase domain. Residue 234 to 240 (SGGVDSS) participates in ATP binding.

As to quaternary structure, homodimer.

The catalysed reaction is XMP + L-glutamine + ATP + H2O = GMP + L-glutamate + AMP + diphosphate + 2 H(+). It functions in the pathway purine metabolism; GMP biosynthesis; GMP from XMP (L-Gln route): step 1/1. Catalyzes the synthesis of GMP from XMP. In Legionella pneumophila (strain Lens), this protein is GMP synthase [glutamine-hydrolyzing].